The chain runs to 209 residues: ATP-dependent Clp protease proteolytic subunit (209 aa).

Ser-113 (nucleophile) is an active-site residue. The active site involves His-138.

Belongs to the peptidase S14 family. As to quaternary structure, fourteen ClpP subunits assemble into 2 heptameric rings which stack back to back to give a disk-like structure with a central cavity, resembling the structure of eukaryotic proteasomes.

It is found in the cytoplasm. It carries out the reaction Hydrolysis of proteins to small peptides in the presence of ATP and magnesium. alpha-casein is the usual test substrate. In the absence of ATP, only oligopeptides shorter than five residues are hydrolyzed (such as succinyl-Leu-Tyr-|-NHMec, and Leu-Tyr-Leu-|-Tyr-Trp, in which cleavage of the -Tyr-|-Leu- and -Tyr-|-Trp bonds also occurs).. Cleaves peptides in various proteins in a process that requires ATP hydrolysis. Has a chymotrypsin-like activity. Plays a major role in the degradation of misfolded proteins. The polypeptide is ATP-dependent Clp protease proteolytic subunit (Blochmanniella floridana).